The following is a 247-amino-acid chain: NAD(P)H-quinone oxidoreductase subunit K (247 aa).

4 residues coordinate [4Fe-4S] cluster: cysteine 63, cysteine 64, cysteine 128, and cysteine 159.

It belongs to the complex I 20 kDa subunit family. NDH-1 can be composed of about 15 different subunits; different subcomplexes with different compositions have been identified which probably have different functions. [4Fe-4S] cluster serves as cofactor.

It localises to the cellular thylakoid membrane. It catalyses the reaction a plastoquinone + NADH + (n+1) H(+)(in) = a plastoquinol + NAD(+) + n H(+)(out). The catalysed reaction is a plastoquinone + NADPH + (n+1) H(+)(in) = a plastoquinol + NADP(+) + n H(+)(out). NDH-1 shuttles electrons from an unknown electron donor, via FMN and iron-sulfur (Fe-S) centers, to quinones in the respiratory and/or the photosynthetic chain. The immediate electron acceptor for the enzyme in this species is believed to be plastoquinone. Couples the redox reaction to proton translocation, and thus conserves the redox energy in a proton gradient. Cyanobacterial NDH-1 also plays a role in inorganic carbon-concentration. The chain is NAD(P)H-quinone oxidoreductase subunit K from Gloeothece citriformis (strain PCC 7424) (Cyanothece sp. (strain PCC 7424)).